The primary structure comprises 572 residues: MFS-type transporter pydD (572 aa).

The segment covering 1–15 (MLQEDKSSETMHDPS) has biased composition (basic and acidic residues). Residues 1–46 (MLQEDKSSETMHDPSTRGVETRNVTAVDSPLETATTSESPETERTN) are disordered. An N-linked (GlcNAc...) asparagine glycan is attached at Asn-23. The segment covering 29–39 (SPLETATTSES) has biased composition (low complexity). Helical transmembrane passes span 56-76 (FWAL…EGTI), 88-108 (LGGG…MTAM), 123-143 (WPML…GGAT), 156-176 (GIGA…VVPL), 185-205 (IVMG…GLIV), 212-232 (WTFY…FSFL), 255-275 (ALFV…GSVY), and 282-302 (VLVP…FEGS). An N-linked (GlcNAc...) asparagine glycan is attached at Asn-317. 6 helical membrane-spanning segments follow: residues 321–341 (VGVM…LYFM), 358–378 (VQIL…GFLM), 386–406 (PIHY…SLLD), 419–439 (IVYS…LLAP), 451–471 (TWSF…AAVF), and 529–549 (WLVS…AREV).

Belongs to the major facilitator superfamily.

The protein localises to the membrane. Functionally, MFS-type transporter; part of the gene cluster that mediates the biosynthesis of pyrrocidines, fungal natural products containing a macrocyclic para-cyclophane connected to a decahydrofluorene ring system that show potent antibiotic activities toward Gram-negative bacteria. The protein is MFS-type transporter pydD of Acremonium sp.